A 283-amino-acid chain; its full sequence is Cyclin-C (283 aa).

In terms of domain architecture, Cyclin N-terminal spans 46-144 (NVIQALGEHL…VLECEFYLLE (99 aa)). The disordered stretch occupies residues 252 to 283 (TILSKMPKPKPPPNSEGEQGPNGSQNSSYSQS). Over residues 272-283 (PNGSQNSSYSQS) the composition is skewed to polar residues. Residue S275 is modified to Phosphoserine.

Belongs to the cyclin family. Cyclin C subfamily. In terms of assembly, component of the Mediator complex, which is composed of MED1, MED4, MED6, MED7, MED8, MED9, MED10, MED11, MED12, MED13, MED13L, MED14, MED15, MED16, MED17, MED18, MED19, MED20, MED21, MED22, MED23, MED24, MED25, MED26, MED27, MED29, MED30, MED31, CCNC, CDK8 and CDC2L6/CDK11. The MED12, MED13, CCNC and CDK8 subunits form a distinct module termed the CDK8 module. Mediator containing the CDK8 module is less active than Mediator lacking this module in supporting transcriptional activation. Individual preparations of the Mediator complex lacking one or more distinct subunits have been variously termed ARC, CRSP, DRIP, PC2, SMCC and TRAP. The cylin/CDK pair formed by CCNC/CDK8 also associates with the large subunit of RNA polymerase II.

It is found in the nucleus. Functionally, component of the Mediator complex, a coactivator involved in regulated gene transcription of nearly all RNA polymerase II-dependent genes. Mediator functions as a bridge to convey information from gene-specific regulatory proteins to the basal RNA polymerase II transcription machinery. Mediator is recruited to promoters by direct interactions with regulatory proteins and serves as a scaffold for the assembly of a functional preinitiation complex with RNA polymerase II and the general transcription factors. Binds to and activates cyclin-dependent kinase CDK8 that phosphorylates the CTD (C-terminal domain) of the large subunit of RNA polymerase II (RNAp II), which may inhibit the formation of a transcription initiation complex. The polypeptide is Cyclin-C (CCNC) (Bos taurus (Bovine)).